The primary structure comprises 32 residues: Tail virion protein G7P (32 aa).

A helical membrane pass occupies residues 9-29 (LYQLIFNAGLVICFGLGVISG).

It belongs to the inovirus G7P protein family.

Its subcellular location is the virion. It localises to the host membrane. May initiate with G9P the virion concomitant assembly-budding process, by interacting with the packaging signal of the viral genome. The assembly-budding takes place at the host inner membrane. In turn, G7P and G9P are present at the end of the filamentous virion that emerges first from the bacterial host. The protein is Tail virion protein G7P (VII) of Escherichia phage If1 (Bacteriophage If1).